We begin with the raw amino-acid sequence, 247 residues long: Cell division protein ZapD (247 aa).

It belongs to the ZapD family. Interacts with FtsZ.

It localises to the cytoplasm. Functionally, cell division factor that enhances FtsZ-ring assembly. Directly interacts with FtsZ and promotes bundling of FtsZ protofilaments, with a reduction in FtsZ GTPase activity. The polypeptide is Cell division protein ZapD (Salmonella arizonae (strain ATCC BAA-731 / CDC346-86 / RSK2980)).